Here is a 230-residue protein sequence, read N- to C-terminus: Orotidine 5'-phosphate decarboxylase (230 aa).

Substrate is bound by residues D10, K31, 58–67 (DLKLHDIPNT), T117, R179, Q188, G208, and R209. The active-site Proton donor is K60. The interval 177-196 (GIRPKDASSDDQKRITTPED) is disordered. The segment covering 179-196 (RPKDASSDDQKRITTPED) has biased composition (basic and acidic residues).

The protein belongs to the OMP decarboxylase family. Type 1 subfamily. In terms of assembly, homodimer.

The catalysed reaction is orotidine 5'-phosphate + H(+) = UMP + CO2. It functions in the pathway pyrimidine metabolism; UMP biosynthesis via de novo pathway; UMP from orotate: step 2/2. In terms of biological role, catalyzes the decarboxylation of orotidine 5'-monophosphate (OMP) to uridine 5'-monophosphate (UMP). This is Orotidine 5'-phosphate decarboxylase from Staphylococcus saprophyticus subsp. saprophyticus (strain ATCC 15305 / DSM 20229 / NCIMB 8711 / NCTC 7292 / S-41).